Consider the following 62-residue polypeptide: Cecropin-A (62 aa).

Positions 1–20 (MNLVKILFCVFACLVFTVTA) are cleaved as a signal peptide. Positions 21-24 (VPEP) are cleaved as a propeptide — removed by a dipeptidylpeptidase. Residue T60 is modified to Threonine amide.

The protein belongs to the cecropin family.

The protein localises to the secreted. In terms of biological role, has antibacterial activity. This Trichoplusia ni (Cabbage looper) protein is Cecropin-A.